The sequence spans 268 residues: NH(3)-dependent NAD(+) synthetase (268 aa).

46-53 contacts ATP; that stretch reads GVSGGQDS. Asp52 is a binding site for Mg(2+). Arg140 is a binding site for deamido-NAD(+). Thr160 contacts ATP. Glu165 is a binding site for Mg(2+). 2 residues coordinate deamido-NAD(+): Lys173 and Asp180. Position 189 (Lys189) interacts with ATP. 260-261 serves as a coordination point for deamido-NAD(+); it reads HK.

This sequence belongs to the NAD synthetase family. As to quaternary structure, homodimer.

It catalyses the reaction deamido-NAD(+) + NH4(+) + ATP = AMP + diphosphate + NAD(+) + H(+). Its pathway is cofactor biosynthesis; NAD(+) biosynthesis; NAD(+) from deamido-NAD(+) (ammonia route): step 1/1. Catalyzes the ATP-dependent amidation of deamido-NAD to form NAD. Uses ammonia as a nitrogen source. In Buchnera aphidicola subsp. Acyrthosiphon pisum (strain APS) (Acyrthosiphon pisum symbiotic bacterium), this protein is NH(3)-dependent NAD(+) synthetase.